A 204-amino-acid polypeptide reads, in one-letter code: ATP-dependent Clp protease proteolytic subunit (204 aa).

The active-site Nucleophile is the S101. H126 is a catalytic residue.

This sequence belongs to the peptidase S14 family. As to quaternary structure, component of the chloroplastic Clp protease core complex.

Its subcellular location is the plastid. It localises to the chloroplast stroma. The catalysed reaction is Hydrolysis of proteins to small peptides in the presence of ATP and magnesium. alpha-casein is the usual test substrate. In the absence of ATP, only oligopeptides shorter than five residues are hydrolyzed (such as succinyl-Leu-Tyr-|-NHMec, and Leu-Tyr-Leu-|-Tyr-Trp, in which cleavage of the -Tyr-|-Leu- and -Tyr-|-Trp bonds also occurs).. Functionally, cleaves peptides in various proteins in a process that requires ATP hydrolysis. Has a chymotrypsin-like activity. Plays a major role in the degradation of misfolded proteins. This is ATP-dependent Clp protease proteolytic subunit from Anthoceros angustus (Hornwort).